A 125-amino-acid chain; its full sequence is Small ribosomal subunit protein uS13 (125 aa).

The segment at 95–125 (GLPVRGQRTKNNCRTRKGKRKTVANKKKATK) is disordered.

Belongs to the universal ribosomal protein uS13 family. In terms of assembly, part of the 30S ribosomal subunit. Forms a loose heterodimer with protein S19. Forms two bridges to the 50S subunit in the 70S ribosome.

Its function is as follows. Located at the top of the head of the 30S subunit, it contacts several helices of the 16S rRNA. In the 70S ribosome it contacts the 23S rRNA (bridge B1a) and protein L5 of the 50S subunit (bridge B1b), connecting the 2 subunits; these bridges are implicated in subunit movement. Contacts the tRNAs in the A and P-sites. The sequence is that of Small ribosomal subunit protein uS13 from Cytophaga hutchinsonii (strain ATCC 33406 / DSM 1761 / CIP 103989 / NBRC 15051 / NCIMB 9469 / D465).